We begin with the raw amino-acid sequence, 322 residues long: Methionyl-tRNA formyltransferase (322 aa).

Residue 113–116 (SLLP) participates in (6S)-5,6,7,8-tetrahydrofolate binding.

Belongs to the Fmt family.

The enzyme catalyses L-methionyl-tRNA(fMet) + (6R)-10-formyltetrahydrofolate = N-formyl-L-methionyl-tRNA(fMet) + (6S)-5,6,7,8-tetrahydrofolate + H(+). Functionally, attaches a formyl group to the free amino group of methionyl-tRNA(fMet). The formyl group appears to play a dual role in the initiator identity of N-formylmethionyl-tRNA by promoting its recognition by IF2 and preventing the misappropriation of this tRNA by the elongation apparatus. The polypeptide is Methionyl-tRNA formyltransferase (Bacteroides thetaiotaomicron (strain ATCC 29148 / DSM 2079 / JCM 5827 / CCUG 10774 / NCTC 10582 / VPI-5482 / E50)).